The sequence spans 156 residues: UPF0756 membrane protein Exig_2210 (156 aa).

Transmembrane regions (helical) follow at residues 5-25, 52-72, 83-103, 109-129, and 131-151; these read LFLI…LIIA, WGVT…DIGF, IGII…HGVG, PLVT…FRGV, and VGPL…DIIV.

Belongs to the UPF0756 family.

The protein resides in the cell membrane. The polypeptide is UPF0756 membrane protein Exig_2210 (Exiguobacterium sibiricum (strain DSM 17290 / CCUG 55495 / CIP 109462 / JCM 13490 / 255-15)).